A 568-amino-acid polypeptide reads, in one-letter code: Phosphoprotein (568 aa).

Disordered stretches follow at residues 1-23 and 38-320; these read MDQDAFILKEDSEVEREAPGGRE and SEPT…GIGE. Positions 7-20 are enriched in basic and acidic residues; sequence ILKEDSEVEREAPG. Positions 33 to 41 are N0 binding; sequence DAVLSSEPT. The segment covering 50–59 has biased composition (polar residues); sequence LHNTINTPQG. The residue at position 68 (S68) is a Phosphoserine; by host. Positions 83 to 101 are enriched in basic and acidic residues; sequence RSGEESRVSGRTSKPEAEA. Position 125 is a phosphoserine; by host (S125). The span at 150–168 shows a compositional bias: basic and acidic residues; it reads GIEDENREMAAHPDKRGED. Residues 191–206 show a composition bias toward polar residues; that stretch reads ASNNGRSMEPGSSHSA. Phosphoserine; by host occurs at positions 192, 249, 257, and 260. A multimerization region spans residues 344–411; sequence FESSRDASYV…SFRDTYKRFS (68 aa). The stretch at 364–429 forms a coiled coil; that stretch reads YAEMTFNVCG…LLMSNLSTLH (66 aa). Residues 412–445 are l protein binding; the sequence is EYQKEQNSLLMSNLSTLHIITDRGGKTDNTDSLT. Residues S447 and S449 each carry the phosphoserine; by host modification. Residues 479–568 are interaction with the nucleocapsid (N-RNA); sequence DLIREDEFRD…VEEDIESLTN (90 aa). The interval 496–516 is disordered; that stretch reads QERDTEPRASNASRLLPSKEK.

This sequence belongs to the respirovirus P protein family. As to quaternary structure, homotetramer. Interacts (via multimerization domain) with polymerase L; this interaction forms the polymerase complex. Interacts (via N-terminus) with N0; this interaction allows P to chaperon N0 before encapsidation and form the N-P complex. Interacts (via C-terminus) with N-RNA template; this interaction positions the polymerase on the template. Post-translationally, phosphorylated by PKC/PRKCZ, and other unknown kinases. Phosphorylation is necessary for viral transcription and replication. The N-terminus contains the majority of phosphorylated sites. Ser-249 is the major site of phosphorylation, but is not necessary for most functions.

Its function is as follows. Essential cofactor of the RNA polymerase L that plays a central role in the transcription and replication by forming the polymerase complex with RNA polymerase L and recruiting L to the genomic N-RNA template for RNA synthesis. Also plays a central role in the encapsidation of nascent RNA chains by forming the encapsidation complex with the nucleocapsid protein N (N-P complex). Acts as a chaperone for newly synthesized free N protein, so-called N0, allowing encapsidation of nascent RNA chains during replication. The nucleoprotein protein N prevents excessive phosphorylation of P, which leads to down-regulation of viral transcription/ replication. Participates, together with N, in the formation of viral factories (viroplasms), which are large inclusions in the host cytoplasm where replication takes place. Recruits host PI4KB and remodel the host endoplasmic reticulum membrane to form viral replication factories. This chain is Phosphoprotein (P/V/C), found in Sendai virus (strain Z) (SeV).